The primary structure comprises 408 residues: CinA-like protein (408 aa).

This sequence belongs to the CinA family.

This Anaeromyxobacter dehalogenans (strain 2CP-1 / ATCC BAA-258) protein is CinA-like protein.